The sequence spans 463 residues: Chaperone SurA (463 aa).

The first 25 residues, 1–25 (MTKPFSVLLASLLVITSTVSPLASA), serve as a signal peptide directing secretion. PpiC domains lie at 174–276 (GSQY…KLVE) and 289–388 (LTEY…QRVG). Disordered regions lie at residues 329–348 (ATAK…GDLG) and 434–463 (GDRA…QPTR). Residues 440-452 (DATAAPEPAAAPA) show a composition bias toward low complexity. The span at 453-463 (APTPPPAQPTR) shows a compositional bias: pro residues.

It is found in the periplasm. It catalyses the reaction [protein]-peptidylproline (omega=180) = [protein]-peptidylproline (omega=0). Functionally, chaperone involved in the correct folding and assembly of outer membrane proteins. Recognizes specific patterns of aromatic residues and the orientation of their side chains, which are found more frequently in integral outer membrane proteins. May act in both early periplasmic and late outer membrane-associated steps of protein maturation. This Xanthomonas campestris pv. campestris (strain 8004) protein is Chaperone SurA.